We begin with the raw amino-acid sequence, 313 residues long: Protein PHOSPHATE-INDUCED 1 (313 aa).

Positions 1–22 are cleaved as a signal peptide; that stretch reads MATSHFILKLFLVISFCNVCFA. The N-linked (GlcNAc...) asparagine glycan is linked to Asn-119.

Belongs to the EXORDIUM family.

It is found in the secreted. Its subcellular location is the extracellular space. The protein localises to the apoplast. Functionally, may be involved in the regulation of cell division. The chain is Protein PHOSPHATE-INDUCED 1 from Nicotiana tabacum (Common tobacco).